A 310-amino-acid polypeptide reads, in one-letter code: MESNQTWITEVILLGFQVDPALELFLFGFFLLFYSLTLMGNGIILGLIYLDSRLHTPMYVFLSHLAIVDMSYASSTVPKMLANLVMHKKVISFAPCILQTFLYLAFAITECLILVMMCYDRYVAICHPLQYTLIMNWRVCTVLASTCWIFSFLLALVHITLILRLPFCGPQKINHFFCQIMSVFKLACADTRLNQVVLFAGSAFILVGPLCLVLVSYLHILVAILRIQSGEGRRKAFSTCSSHLCVVGLFFGSAIVMYMAPKSSHSQERRKILSLFYSLFNPILNPLIYSLRNAEVKGALKRVLWKQRSM.

The Extracellular portion of the chain corresponds to 1–24 (MESNQTWITEVILLGFQVDPALEL). Asn4 is a glycosylation site (N-linked (GlcNAc...) asparagine). A helical membrane pass occupies residues 25–48 (FLFGFFLLFYSLTLMGNGIILGLI). The Cytoplasmic segment spans residues 49–56 (YLDSRLHT). A helical membrane pass occupies residues 57–78 (PMYVFLSHLAIVDMSYASSTVP). The Extracellular segment spans residues 79–99 (KMLANLVMHKKVISFAPCILQ). Cys96 and Cys188 form a disulfide bridge. A helical transmembrane segment spans residues 100 to 119 (TFLYLAFAITECLILVMMCY). At 120 to 138 (DRYVAICHPLQYTLIMNWR) the chain is on the cytoplasmic side. A helical transmembrane segment spans residues 139-157 (VCTVLASTCWIFSFLLALV). Residues 158-194 (HITLILRLPFCGPQKINHFFCQIMSVFKLACADTRLN) lie on the Extracellular side of the membrane. The chain crosses the membrane as a helical span at residues 195–218 (QVVLFAGSAFILVGPLCLVLVSYL). The Cytoplasmic segment spans residues 219–235 (HILVAILRIQSGEGRRK). Residues 236 to 258 (AFSTCSSHLCVVGLFFGSAIVMY) traverse the membrane as a helical segment. Topologically, residues 259–271 (MAPKSSHSQERRK) are extracellular. Residues 272-291 (ILSLFYSLFNPILNPLIYSL) traverse the membrane as a helical segment. The Cytoplasmic portion of the chain corresponds to 292 to 310 (RNAEVKGALKRVLWKQRSM).

This sequence belongs to the G-protein coupled receptor 1 family.

The protein resides in the cell membrane. Odorant receptor. The protein is Olfactory receptor 2A12 (OR2A12) of Homo sapiens (Human).